Here is a 352-residue protein sequence, read N- to C-terminus: Cell division protein ZipA (352 aa).

Residues 1 to 6 (MKDLQL) lie on the Periplasmic side of the membrane. Residues 7-27 (VLFVLGAIAIIAVLVHGFWSI) form a helical membrane-spanning segment. Residues 28–352 (RKQQPKSMKQ…KDYLRRLNAA (325 aa)) lie on the Cytoplasmic side of the membrane. Disordered regions lie at residues 78–120 (KPVL…HVEP) and 138–160 (PAPTASTSMNTPKKIFNPSTSTA). A compositionally biased stretch (polar residues) spans 83–105 (TNLSQKPHSGTTKLTDTPLQDSL). Residues 111–120 (HKTEPEHVEP) are compositionally biased toward basic and acidic residues. Over residues 141 to 160 (TASTSMNTPKKIFNPSTSTA) the composition is skewed to polar residues.

The protein belongs to the ZipA family. Interacts with FtsZ via their C-terminal domains.

It is found in the cell inner membrane. Its function is as follows. Essential cell division protein that stabilizes the FtsZ protofilaments by cross-linking them and that serves as a cytoplasmic membrane anchor for the Z ring. Also required for the recruitment to the septal ring of downstream cell division proteins. The chain is Cell division protein ZipA from Shewanella frigidimarina (strain NCIMB 400).